The chain runs to 645 residues: Threonine--tRNA ligase (645 aa).

One can recognise a TGS domain in the interval 1–63 (MEQINIQFPD…ETDGSIEIVT (63 aa)). The interval 242–540 (DHRKIGKELE…LTEETKGAFP (299 aa)) is catalytic. 3 residues coordinate Zn(2+): C336, H387, and H517.

Belongs to the class-II aminoacyl-tRNA synthetase family. In terms of assembly, homodimer. Zn(2+) serves as cofactor.

It localises to the cytoplasm. The enzyme catalyses tRNA(Thr) + L-threonine + ATP = L-threonyl-tRNA(Thr) + AMP + diphosphate + H(+). Its function is as follows. Catalyzes the attachment of threonine to tRNA(Thr) in a two-step reaction: L-threonine is first activated by ATP to form Thr-AMP and then transferred to the acceptor end of tRNA(Thr). Also edits incorrectly charged L-seryl-tRNA(Thr). This Staphylococcus aureus (strain JH1) protein is Threonine--tRNA ligase.